A 915-amino-acid chain; its full sequence is Isoleucine--tRNA ligase (915 aa).

The 'HIGH' region motif lies at 57 to 67 (PYANGNLHMGH). Glu554 contacts L-isoleucyl-5'-AMP. Residues 595–599 (KMSKS) carry the 'KMSKS' region motif. Lys598 provides a ligand contact to ATP. Residues Cys885, Cys888, Cys905, and Cys908 each coordinate Zn(2+).

The protein belongs to the class-I aminoacyl-tRNA synthetase family. IleS type 1 subfamily. As to quaternary structure, monomer. Requires Zn(2+) as cofactor.

Its subcellular location is the cytoplasm. It catalyses the reaction tRNA(Ile) + L-isoleucine + ATP = L-isoleucyl-tRNA(Ile) + AMP + diphosphate. Catalyzes the attachment of isoleucine to tRNA(Ile). As IleRS can inadvertently accommodate and process structurally similar amino acids such as valine, to avoid such errors it has two additional distinct tRNA(Ile)-dependent editing activities. One activity is designated as 'pretransfer' editing and involves the hydrolysis of activated Val-AMP. The other activity is designated 'posttransfer' editing and involves deacylation of mischarged Val-tRNA(Ile). In Staphylococcus carnosus (strain TM300), this protein is Isoleucine--tRNA ligase.